Here is a 366-residue protein sequence, read N- to C-terminus: Cyclic amide hydrolase (366 aa).

An RU A region spans residues 1–103 (MKVGVHKLAM…TLFTRAPDDG (103 aa)). Substrate-binding positions include Arg-51 and 82–83 (SG). The RU B stretch occupies residues 110-247 (RLALGIGITR…CEVLLFGNAP (138 aa)). The active site involves Lys-160. Substrate is bound by residues Arg-192, 230–231 (SA), Arg-327, and 346–347 (SG). The active-site Nucleophile is the Ser-230. An RU C region spans residues 253–366 (FRIGHGVLKD…AAPIAAIVRA (114 aa)).

Belongs to the cyclic amide hydrolase (CyAH) family. In terms of assembly, homotetramer.

In terms of biological role, cyclic amide hydrolase of unknown substrate specificity. Catalyzes the hydrolytic ring-opening of a cyclic amide. Does not act on cyanuric acid nor barbituric acid. The sequence is that of Cyclic amide hydrolase from Azorhizobium caulinodans (strain ATCC 43989 / DSM 5975 / JCM 20966 / LMG 6465 / NBRC 14845 / NCIMB 13405 / ORS 571).